We begin with the raw amino-acid sequence, 687 residues long: Dictomallein (687 aa).

2 disordered regions span residues 1–45 (MGNG…SRRL) and 73–112 (TAGG…STSA). The Peptidase M66 domain occupies 233 to 501 (PVFGTDADVQ…QAWIASRVLA (269 aa)). Residue His393 coordinates Zn(2+). The active site involves Glu394. Residues His397 and His403 each coordinate Zn(2+).

The protein belongs to the dictomallein family. Requires Zn(2+) as cofactor.

The sequence is that of Dictomallein (dtmL) from Burkholderia pseudomallei (strain 668).